A 221-amino-acid polypeptide reads, in one-letter code: Toxin coregulated pilus biosynthesis protein P (221 aa).

The segment at residues 5-109 is a DNA-binding region (ompR/PhoB-type); it reads RVIYQFPDNL…VKLQGYRINI (105 aa). Residues 143–163 form a helical membrane-spanning segment; sequence VVPYLVFSALYVALLPVIWWS.

The protein resides in the cell membrane. Involved in TCP pilus biogenesis. This is Toxin coregulated pilus biosynthesis protein P (tcpP) from Vibrio cholerae serotype O1 (strain ATCC 39315 / El Tor Inaba N16961).